The chain runs to 178 residues: Large ribosomal subunit protein uL6 (178 aa).

This sequence belongs to the universal ribosomal protein uL6 family. Part of the 50S ribosomal subunit.

In terms of biological role, this protein binds to the 23S rRNA, and is important in its secondary structure. It is located near the subunit interface in the base of the L7/L12 stalk, and near the tRNA binding site of the peptidyltransferase center. This Helicobacter hepaticus (strain ATCC 51449 / 3B1) protein is Large ribosomal subunit protein uL6.